Reading from the N-terminus, the 303-residue chain is Diaminopimelate epimerase (303 aa).

Residue Asn14 participates in substrate binding. The span at 60-74 shows a compositional bias: low complexity; it reads PVSSAGATADAAAGR. Residues 60–86 form a disordered region; that stretch reads PVSSAGATADAAAGRPPQPSAGRPPQP. Pro residues predominate over residues 75–86; the sequence is PPQPSAGRPPQP. Residue Asn97 participates in substrate binding. Residue Cys106 is the Proton donor of the active site. Substrate is bound by residues 107 to 108, Asn178, Asn209, and 227 to 228; these read GN and ER. The active-site Proton acceptor is the Cys236. 237–238 is a substrate binding site; it reads GS.

It belongs to the diaminopimelate epimerase family. As to quaternary structure, homodimer.

Its subcellular location is the cytoplasm. The catalysed reaction is (2S,6S)-2,6-diaminopimelate = meso-2,6-diaminopimelate. It functions in the pathway amino-acid biosynthesis; L-lysine biosynthesis via DAP pathway; DL-2,6-diaminopimelate from LL-2,6-diaminopimelate: step 1/1. In terms of biological role, catalyzes the stereoinversion of LL-2,6-diaminopimelate (L,L-DAP) to meso-diaminopimelate (meso-DAP), a precursor of L-lysine and an essential component of the bacterial peptidoglycan. The chain is Diaminopimelate epimerase from Acidothermus cellulolyticus (strain ATCC 43068 / DSM 8971 / 11B).